The following is a 401-amino-acid chain: Probable tRNA sulfurtransferase (401 aa).

Residues 60–165 (EPIIDKLKNV…QEGTYITCHD (106 aa)) form the THUMP domain. Residues 183–184 (ML), 208–209 (HF), Arg-265, Gly-287, and Gln-296 each bind ATP.

The protein belongs to the ThiI family.

Its subcellular location is the cytoplasm. The enzyme catalyses [ThiI sulfur-carrier protein]-S-sulfanyl-L-cysteine + a uridine in tRNA + 2 reduced [2Fe-2S]-[ferredoxin] + ATP + H(+) = [ThiI sulfur-carrier protein]-L-cysteine + a 4-thiouridine in tRNA + 2 oxidized [2Fe-2S]-[ferredoxin] + AMP + diphosphate. The catalysed reaction is [ThiS sulfur-carrier protein]-C-terminal Gly-Gly-AMP + S-sulfanyl-L-cysteinyl-[cysteine desulfurase] + AH2 = [ThiS sulfur-carrier protein]-C-terminal-Gly-aminoethanethioate + L-cysteinyl-[cysteine desulfurase] + A + AMP + 2 H(+). It participates in cofactor biosynthesis; thiamine diphosphate biosynthesis. Its function is as follows. Catalyzes the ATP-dependent transfer of a sulfur to tRNA to produce 4-thiouridine in position 8 of tRNAs, which functions as a near-UV photosensor. Also catalyzes the transfer of sulfur to the sulfur carrier protein ThiS, forming ThiS-thiocarboxylate. This is a step in the synthesis of thiazole, in the thiamine biosynthesis pathway. The sulfur is donated as persulfide by IscS. In Geobacillus sp. (strain WCH70), this protein is Probable tRNA sulfurtransferase.